We begin with the raw amino-acid sequence, 215 residues long: GTP-binding protein YPT6 (215 aa).

Residue 17 to 24 coordinates GTP; it reads GEQGVGKT. The short motif at 39–47 is the Effector region element; it reads YQATIGIDF. Residues 65–69 and 124–127 contribute to the GTP site; these read DTAGQ and NKSD. Residues 178–196 are compositionally biased toward polar residues; sequence NSESTPLDSENANSANQNK. The segment at 178–215 is disordered; that stretch reads NSESTPLDSENANSANQNKPGVIDISTAEEQEQSACQC. 2 S-geranylgeranyl cysteine lipidation sites follow: Cys-213 and Cys-215. Cysteine methyl ester is present on Cys-215.

This sequence belongs to the small GTPase superfamily. Rab family. In terms of assembly, interacts with YIF1, YIP3 and YIP4.

The protein resides in the cell membrane. Protein transport. Might participate in post-Golgi transport. This chain is GTP-binding protein YPT6 (YPT6), found in Saccharomyces cerevisiae (strain ATCC 204508 / S288c) (Baker's yeast).